The primary structure comprises 961 residues: Aconitate hydratase A (961 aa).

Residues C499, C565, and C568 each contribute to the [4Fe-4S] cluster site.

It belongs to the aconitase/IPM isomerase family. In terms of assembly, monomer. It depends on [4Fe-4S] cluster as a cofactor.

The enzyme catalyses citrate = D-threo-isocitrate. It carries out the reaction (2S,3R)-3-hydroxybutane-1,2,3-tricarboxylate = 2-methyl-cis-aconitate + H2O. It participates in carbohydrate metabolism; tricarboxylic acid cycle; isocitrate from oxaloacetate: step 2/2. Its pathway is organic acid metabolism; propanoate degradation. Involved in the catabolism of short chain fatty acids (SCFA) via the tricarboxylic acid (TCA)(acetyl degradation route) and probably via the 2-methylcitrate cycle I (propionate degradation route). Catalyzes the reversible isomerization of citrate to isocitrate via cis-aconitate. The apo form of AcnA functions as a RNA-binding regulatory protein. Could catalyze the hydration of 2-methyl-cis-aconitate to yield (2R,3S)-2-methylisocitrate. The sequence is that of Aconitate hydratase A (acn) from Mycobacterium avium.